We begin with the raw amino-acid sequence, 76 residues long: Alpha-amylase inhibitor Z-2685 (76 aa).

2 disulfide bridges follow: C9–C25 and C43–C70.

In terms of biological role, inhibits mammalian alpha-amylases specifically but has no action on plant and microbial alpha-amylases. The polypeptide is Alpha-amylase inhibitor Z-2685 (Streptomyces rochei (Streptomyces parvullus)).